A 128-amino-acid chain; its full sequence is Protein C10 (128 aa).

This sequence belongs to the UPF0456 family.

The protein resides in the cytoplasm. This Xenopus laevis (African clawed frog) protein is Protein C10.